The primary structure comprises 501 residues: MKLELDMFFLYGSTILPECILIFSLLIILIIDLTFPKKDTIWLYFISLTSLLISIIILLFQYKTDPIISFLGSFQTDSFNRIFQSFIVFCSILCIPLSIEYIKCAKMAIPEFLIFILTATVGGMFLCGANDLVTIFVSLECLSLCSYLLCGYTKRDIRSNEAAIKYLLIGGTSSSILAYGFSWLYGLSGGETNIQKITNGLLNAETYNSSGTFIAFICILVGLAFKLSLVPFHQWTPDIYEGSPTPVVAFLSVTSKIAGLALATRILNILFSFSPNEWKIFLEILAILSMILGNLVAITQTSMKRMLAYSSISQIGYILIGLITGDLKGYTSMTIYVFFYIFMNLGTFACIILYSLRTGTDNIRDYAGLYIKDPLLSFSLTLCLLSLGGLPPLTGFFGKLYLFWCGWQSGFYLLVFIALITSVISLYYYLKIIKLILTKKNNEINPYIQAYIITSPTFFSKNPIEFVMIFCVLGSTFLGIIINPIFSFFQDSLSLSVFFIK.

Helical transmembrane passes span 15–35, 40–60, 82–102, 107–127, 132–152, 167–187, 212–232, 244–264, 278–298, 307–327, 333–353, 378–398, 410–430, and 466–486; these read ILPE…DLTF, TIWL…ILLF, IFQS…IEYI, MAIP…MFLC, LVTI…LCGY, LLIG…LYGL, TFIA…LVPF, PTPV…ALAT, WKIF…LVAI, LAYS…TGDL, MTIY…CIIL, FSLT…GFFG, GFYL…YYYL, and FVMI…NPIF.

The protein belongs to the complex I subunit 2 family. In terms of assembly, NDH is composed of at least 16 different subunits, 5 of which are encoded in the nucleus.

The protein resides in the plastid. Its subcellular location is the chloroplast thylakoid membrane. It catalyses the reaction a plastoquinone + NADH + (n+1) H(+)(in) = a plastoquinol + NAD(+) + n H(+)(out). The catalysed reaction is a plastoquinone + NADPH + (n+1) H(+)(in) = a plastoquinol + NADP(+) + n H(+)(out). NDH shuttles electrons from NAD(P)H:plastoquinone, via FMN and iron-sulfur (Fe-S) centers, to quinones in the photosynthetic chain and possibly in a chloroplast respiratory chain. The immediate electron acceptor for the enzyme in this species is believed to be plastoquinone. Couples the redox reaction to proton translocation, and thus conserves the redox energy in a proton gradient. The chain is NAD(P)H-quinone oxidoreductase subunit 2, chloroplastic from Marchantia polymorpha (Common liverwort).